A 608-amino-acid chain; its full sequence is Albumin (608 aa).

Positions 1–18 are cleaved as a signal peptide; that stretch reads MKWVTFISLLLLFSSAYS. A propeptide spanning residues 19-24 is cleaved from the precursor; it reads RGVTRR. 3 Albumin domains span residues 19-210, 211-403, and 404-601; these read RGVT…DALR, EKVL…EFKP, and LVEE…KLVA. A Cu cation-binding site is contributed by H27. A Phosphoserine modification is found at S29. 2 residues coordinate Ca(2+): E30 and D37. A disulfide bridge links C77 with C86. A phosphoserine mark is found at S82 and S89. H91 provides a ligand contact to Zn(2+). 6 disulfides stabilise this stretch: C99/C115, C114/C125, C148/C193, C192/C201, C224/C270, and C269/C277. K229 is modified (N6-succinyllysine). E268 is a binding site for Ca(2+). Positions 271 and 273 each coordinate Zn(2+). 4 residues coordinate Ca(2+): D273, E276, D279, and D283. 8 disulfide bridges follow: C289–C303, C302–C313, C340–C385, C384–C393, C416–C462, C461–C472, C485–C501, and C500–C511. S443 bears the Phosphoserine mark. Phosphothreonine is present on residues T444 and T446. Residue K460 is modified to N6-succinyllysine. Phosphoserine is present on S513. 2 disulfide bridges follow: C538/C583 and C582/C591. Position 558 is an N6-methyllysine (K558). Residue T570 is modified to Phosphothreonine. K588 carries the post-translational modification N6-succinyllysine.

Belongs to the ALB/AFP/VDB family. As to quaternary structure, interacts with FCGRT; this interaction regulates ALB homeostasis. Interacts with TASOR. In plasma, occurs in a covalently-linked complex with chromophore-bound alpha-1-microglobulin; this interaction does not prevent fatty acid binding to ALB. Post-translationally, phosphorylated by FAM20C in the extracellular medium. As to expression, plasma.

It is found in the secreted. Its function is as follows. Binds water, Ca(2+), Na(+), K(+), fatty acids, hormones, bilirubin and drugs. Its main function is the regulation of the colloidal osmotic pressure of blood. Major zinc transporter in plasma, typically binds about 80% of all plasma zinc. Major calcium and magnesium transporter in plasma, binds approximately 45% of circulating calcium and magnesium in plasma. Potentially has more than two calcium-binding sites and might additionally bind calcium in a non-specific manner. The shared binding site between zinc and calcium at residue Asp-273 suggests a crosstalk between zinc and calcium transport in the blood. The rank order of affinity is zinc &gt; calcium &gt; magnesium. Binds to the bacterial siderophore enterobactin and inhibits enterobactin-mediated iron uptake of E.coli from ferric transferrin, and may thereby limit the utilization of iron and growth of enteric bacteria such as E.coli. Does not prevent iron uptake by the bacterial siderophore aerobactin. The protein is Albumin (ALB) of Felis catus (Cat).